The sequence spans 318 residues: Ribose-phosphate pyrophosphokinase 1 (318 aa).

ATP is bound at residue 96-101 (RQDKKD). 4 residues coordinate Mg(2+): aspartate 128, histidine 130, aspartate 139, and aspartate 143. ATP is bound at residue histidine 130. A binding of phosphoribosylpyrophosphate region spans residues 212 to 227 (KDRVAILVDDMADTCG).

It belongs to the ribose-phosphate pyrophosphokinase family. Homodimer. The active form is probably a hexamer composed of 3 homodimers. The cofactor is Mg(2+).

It catalyses the reaction D-ribose 5-phosphate + ATP = 5-phospho-alpha-D-ribose 1-diphosphate + AMP + H(+). The protein operates within metabolic intermediate biosynthesis; 5-phospho-alpha-D-ribose 1-diphosphate biosynthesis; 5-phospho-alpha-D-ribose 1-diphosphate from D-ribose 5-phosphate (route I): step 1/1. Activated by magnesium and inorganic phosphate. In terms of biological role, catalyzes the synthesis of phosphoribosylpyrophosphate (PRPP) that is essential for nucleotide synthesis. In Bos taurus (Bovine), this protein is Ribose-phosphate pyrophosphokinase 1 (PRPS1).